The chain runs to 631 residues: Hepatocyte nuclear factor 1-alpha (631 aa).

The dimerization stretch occupies residues 1-31; sequence MVSKLSQLQTELLAALLESGLSKEALIQALG. Residues 1–32 enclose the HNF-p1 domain; that stretch reads MVSKLSQLQTELLAALLESGLSKEALIQALGE. Residues 40 to 81 form a disordered region; sequence GEGPLDKGESCGGGRGELAELPNGLGETRGSEDETDDDGEDF. A Phosphoserine modification is found at serine 70. At threonine 74 the chain carries Phosphothreonine. The POU-specific atypical domain occupies 87–182; that stretch reads KELENLSPEE…VAQQFTHAGQ (96 aa). Serine 93 is subject to Phosphoserine. Residue lysine 117 forms a Glycyl lysine isopeptide (Lys-Gly) (interchain with G-Cter in ubiquitin) linkage. 4 interaction with DNA regions span residues 130–132, 143–149, 155–158, and 203–206; these read QRE, HLSQHLN, KTQK, and RFKW. The segment at 183–205 is disordered; it reads GGLIEEPTGDELPTKKGRRNRFK. The short motif at 197–205 is the Nuclear localization signal element; it reads KKGRRNRFK. Positions 199-279 form a DNA-binding region, homeobox; HNF1-type; sequence GRRNRFKWGP…NRRKEEAFRH (81 aa). Residue serine 247 is modified to Phosphoserine. 2 interaction with DNA regions span residues 263–265 and 270–273; these read RVY and NRRK. 2 disordered regions span residues 283–358 and 545–567; these read MDTY…GLEP and SDTE…TLHV. Residues 288 to 298 show a composition bias toward pro residues; sequence GPPPGPGPGPA. Serine 313 is modified (phosphoserine). The span at 325–353 shows a compositional bias: polar residues; it reads PATSETAEVPSSSGGPLVTVSTPLHQVSP.

It belongs to the HNF1 homeobox family. Binds DNA as a dimer. Heterotetramer with PCBD1; formed by a dimer of dimers. Interacts with PCBD1. Interacts with BHLHE41. Interacts with NR5A2. Interacts with SPOP; this interaction promotes ubiquitination and degradation of HNF1A. Post-translationally, ubiquitinated in s SPOP-dependent manner; leading to prteasomal degradation. Liver.

It is found in the nucleus. In terms of biological role, transcriptional activator that regulates the tissue specific expression of multiple genes, especially in pancreatic islet cells and in liver. Binds to the inverted palindrome 5'-GTTAATNATTAAC-3'. Activates the transcription of CYP1A2, CYP2E1 and CYP3A11. (Microbial infection) Plays a crucial role for hepatitis B virus gene transcription and DNA replication. Mechanistically, synergistically cooperates with NR5A2 to up-regulate the activity of one of the critical cis-elements in the hepatitis B virus genome enhancer II (ENII). The polypeptide is Hepatocyte nuclear factor 1-alpha (HNF1A) (Homo sapiens (Human)).